Reading from the N-terminus, the 326-residue chain is Probable oxidoreductase patJ (326 aa).

The tract at residues His287 to Lys326 is disordered. The span at Gly292 to Val304 shows a compositional bias: polar residues.

Belongs to the oxidoreductase OpS7 family.

Its subcellular location is the vacuole lumen. It is found in the cytoplasmic vesicle lumen. It participates in mycotoxin biosynthesis; patulin biosynthesis. Probable oxidoreductase; part of the gene cluster that mediates the biosynthesis of patulin, an acetate-derived tetraketide mycotoxin produced by several fungal species that shows antimicrobial properties against several bacteria. PatJ acts with patO in the vacuole to convert gentisyl alcohol to isoepoxydon. The pathway begins with the synthesis of 6-methylsalicylic acid by the polyketide synthase (PKS) patK via condensation of acetate and malonate units. The 6-methylsalicylic acid decarboxylase patG then catalyzes the decarboxylation of 6-methylsalicylic acid to yield m-cresol (also known as 3-methylphenol). These first reactions occur in the cytosol. The intermediate m-cresol is then transported into the endoplasmic reticulum where the cytochrome P450 monooxygenase patH converts it to m-hydroxybenzyl alcohol, which is further converted to gentisyl alcohol by the cytochrome P450 monooxygenase patI. The oxidoreductases patJ and patO further convert gentisyl alcohol to isoepoxydon in the vacuole. PatN catalyzes then the transformation of isoepoxydon into phyllostine. The cluster protein patF is responsible for the conversion from phyllostine to neopatulin whereas the alcohol dehydrogenase patD converts neopatulin to E-ascladiol. The steps between isoepoxydon and E-ascladiol occur in the cytosol, and E-ascladiol is probably secreted to the extracellular space by one of the cluster-specific transporters patC or patM. Finally, the secreted patulin synthase patE catalyzes the conversion of E-ascladiol to patulin. The chain is Probable oxidoreductase patJ from Penicillium expansum (Blue mold rot fungus).